A 396-amino-acid polypeptide reads, in one-letter code: Elongation factor Tu (396 aa).

Residues 10–205 (KSHANIGTIG…AVDEYIPTPE (196 aa)) enclose the tr-type G domain. A G1 region spans residues 19 to 26 (GHVDHGKT). 19-26 (GHVDHGKT) provides a ligand contact to GTP. Residue T26 participates in Mg(2+) binding. Positions 61 to 65 (GITIS) are G2. Residues 82–85 (DCPG) are G3. GTP is bound by residues 82–86 (DCPGH) and 137–140 (NKCD). Positions 137–140 (NKCD) are G4. Residues 175–177 (SAL) form a G5 region.

The protein belongs to the TRAFAC class translation factor GTPase superfamily. Classic translation factor GTPase family. EF-Tu/EF-1A subfamily. Monomer.

The protein resides in the cytoplasm. The enzyme catalyses GTP + H2O = GDP + phosphate + H(+). Its function is as follows. GTP hydrolase that promotes the GTP-dependent binding of aminoacyl-tRNA to the A-site of ribosomes during protein biosynthesis. The protein is Elongation factor Tu of Bacillus pumilus (strain SAFR-032).